The sequence spans 71 residues: uncharacterized protein (71 aa).

This is an uncharacterized protein from Stutzerimonas stutzeri (strain A1501) (Pseudomonas stutzeri).